The sequence spans 508 residues: Steroid 17-alpha-hydroxylase/17,20 lyase (508 aa).

Asn202 is a binding site for substrate. A heme-binding site is contributed by Cys442.

This sequence belongs to the cytochrome P450 family. Heme is required as a cofactor.

It is found in the endoplasmic reticulum membrane. The protein localises to the microsome membrane. It catalyses the reaction a C21-steroid + reduced [NADPH--hemoprotein reductase] + O2 = a 17alpha-hydroxy-C21-steroid + oxidized [NADPH--hemoprotein reductase] + H2O + H(+). The catalysed reaction is progesterone + reduced [NADPH--hemoprotein reductase] + O2 = 17alpha-hydroxyprogesterone + oxidized [NADPH--hemoprotein reductase] + H2O + H(+). The enzyme catalyses pregnenolone + reduced [NADPH--hemoprotein reductase] + O2 = 17alpha-hydroxypregnenolone + oxidized [NADPH--hemoprotein reductase] + H2O + H(+). It carries out the reaction 17alpha-hydroxypregnenolone + reduced [NADPH--hemoprotein reductase] + O2 = 3beta-hydroxyandrost-5-en-17-one + acetate + oxidized [NADPH--hemoprotein reductase] + H2O + 2 H(+). Its pathway is steroid hormone biosynthesis. The protein operates within steroid biosynthesis; glucocorticoid biosynthesis. With respect to regulation, regulated predominantly by intracellular cAMP levels. The 17,20-lyase activity is stimulated by cytochrome b5, which acts as an allosteric effector increasing the Vmax of the lyase activity. Functionally, a cytochrome P450 monooxygenase involved in corticoid and androgen biosynthesis. Catalyzes 17-alpha hydroxylation of C21 steroids, which is common for both pathways. A second oxidative step, required only for androgen synthesis, involves an acyl-carbon cleavage. Hydroxylates pregnenolone to form 17-alpha pregnenolone, followed by the cleavage of the C17-C20 bond to form dehydroepiandrosterone (DHEA). Has 17-alpha hydroxylase activity toward progesterone. The 17-alpha hydroxy intermediates, as part of adrenal glucocorticoids biosynthesis pathway, are precursors of cortisol. Mechanistically, uses molecular oxygen inserting one oxygen atom into a substrate, and reducing the second into a water molecule, with two electrons provided by NADPH via cytochrome P450 reductase (CPR; NADPH-ferrihemoprotein reductase). The chain is Steroid 17-alpha-hydroxylase/17,20 lyase (CYP17A1) from Papio hamadryas ursinus (Chacma baboon).